A 309-amino-acid chain; its full sequence is Coenzyme PQQ synthesis protein B (309 aa).

Belongs to the PqqB family.

The protein operates within cofactor biosynthesis; pyrroloquinoline quinone biosynthesis. Its function is as follows. May be involved in the transport of PQQ or its precursor to the periplasm. This is Coenzyme PQQ synthesis protein B from Nitrosococcus oceani (strain ATCC 19707 / BCRC 17464 / JCM 30415 / NCIMB 11848 / C-107).